The primary structure comprises 415 residues: Adipocyte plasma membrane-associated protein (415 aa).

The tract at residues 1–30 (MNEAEGLRQRRPLRPQVITEDSPAQEAKEG) is disordered. Over 1–39 (MNEAEGLRQRRPLRPQVITEDSPAQEAKEGSAYSSKVFR) the chain is Cytoplasmic. The helical transmembrane segment at 40–60 (VTFLTLAASLAVPLLGATVLL) threads the bilayer. Residues 61–412 (DCPIDPQPIS…RSPFICRLNL (352 aa)) are Extracellular-facing. N-linked (GlcNAc...) asparagine glycosylation occurs at Asn159.

The protein belongs to the strictosidine synthase family.

It is found in the membrane. This Gallus gallus (Chicken) protein is Adipocyte plasma membrane-associated protein (APMAP).